Here is a 315-residue protein sequence, read N- to C-terminus: Putative S-adenosyl-L-methionine-dependent methyltransferase MAV_4557 (315 aa).

Residues Asp-134 and Asp-163 to Leu-164 each bind S-adenosyl-L-methionine.

The protein belongs to the UPF0677 family.

Exhibits S-adenosyl-L-methionine-dependent methyltransferase activity. The chain is Putative S-adenosyl-L-methionine-dependent methyltransferase MAV_4557 from Mycobacterium avium (strain 104).